Consider the following 283-residue polypeptide: Transmembrane protein 45B (283 aa).

7 helical membrane-spanning segments follow: residues 7–27 (HALPGTFFLLFGLWWSIKCPF), 55–75 (LIEGSLKIFFAFVGIMAEQFV), 99–119 (MYLFYGISGIADVLSVSSHHV), 121–141 (VGLDRLFLSLALFVEGFLFYF), 153–173 (IHSLLLFAVFGGSASTMMEVF), 187–207 (LAILQGTWFYQIGFVLYPLSG), and 218–238 (IMFITMCFCWHLAVALLIVGI). Positions 261–283 (GLRKSTSTDSSSQKALLQESDEE) are disordered. Over residues 264-275 (KSTSTDSSSQKA) the composition is skewed to polar residues.

Belongs to the TMEM45 family.

It is found in the membrane. This chain is Transmembrane protein 45B (tmem45b), found in Danio rerio (Zebrafish).